A 508-amino-acid polypeptide reads, in one-letter code: MATDWLGSIVSINCGDSLGVYQGRVSAVDQVSQTISLTRPFHNGVKCLVPEVTFRAGDITELKILEIPGPGDNQHFGDLHQTELGPSGAGCQVGINQNGTGKLVKKPASSSSAPQNIPKRTDVKSQDVAVSPQQQQCSKSYVDRHMESLSQSKSFRRRHNSWSSSSRHPNQATPKKSGLKNGQMKNKDDECFGDDIEEIPDTDFDFEGNLALFDKAAVFEEIDTYERRSGTRSRGIPNERPTRYRHDENILESEPIVYRRITVPHNVSKEFCTDSGLVVPSISYELHKKLLSVAEKHGLTLERRLEMTGVCASQMALTLLGGPNRLNPKNVHQRPTVALLCGPHVKGAQGIRCGRHLANHDVQVILFLPNFVKMLESITNELSLFSKTQGQQVSSLKDLPTSPVDLVINCLDCPENVFLRDQPWYKAAVAWANQNRAPVLSIDPPVHEVEQGIDAKWSLALGLPLPLGEHAGRIYLCDIGIPQQVFQEVGINYHSPFGCKFVIPLHSA.

One can recognise a Sm domain in the interval 1–68 (MATDWLGSIV…ITELKILEIP (68 aa)). The segment at 1-79 (MATDWLGSIV…PGDNQHFGDL (79 aa)) is required for P-body targeting and interaction with DCP1A. Residues 89–192 (AGCQVGINQN…QMKNKDDECF (104 aa)) form a disordered region. S131, S138, S140, and S161 each carry phosphoserine. The required for interaction with DDX6 stretch occupies residues 191-296 (CFGDDIEEIP…HKKLLSVAEK (106 aa)). The 37-residue stretch at 192-228 (FGDDIEEIPDTDFDFEGNLALFDKAAVFEEIDTYERR) folds into the DFDF domain. Residues 283 to 487 (SYELHKKLLS…DIGIPQQVFQ (205 aa)) enclose the YjeF N-terminal domain.

This sequence belongs to the EDC3 family. As to quaternary structure, homodimer (via YjeF N-terminal domain). Forms a complex with DCP1A, DCP2, DDX6 and EDC4/HEDLS, within this complex directly interacts with DCP1A and DDX6. Interacts with ZFP36.

Its subcellular location is the cytoplasm. The protein resides in the P-body. In terms of biological role, binds single-stranded RNA. Involved in the process of mRNA degradation and in the positive regulation of mRNA decapping. The sequence is that of Enhancer of mRNA-decapping protein 3 (EDC3) from Pongo abelii (Sumatran orangutan).